The sequence spans 2035 residues: Ral GTPase-activating protein subunit alpha-1 (2035 aa).

The interval 343 to 384 (LVSREESKNDTVDKADKTAEPEQSHSNTSTLTEREPSSSSLC) is disordered. A compositionally biased stretch (basic and acidic residues) spans 345–365 (SREESKNDTVDKADKTAEPEQ). Residues 366 to 384 (SHSNTSTLTEREPSSSSLC) show a composition bias toward polar residues. A phosphoserine mark is found at serine 710 and serine 720. The tract at residues 714–754 (SFSRGWSRDQPGQAPMRQRSATTTGSPGTEKARSIVRQKTV) is disordered. Residue threonine 753 is modified to Phosphothreonine. Serine 772 carries the phosphoserine modification. Position 777 is a phosphothreonine (threonine 777). Residue serine 796 is modified to Phosphoserine. Residues 807 to 817 (ERAKVNKEDTS) show a composition bias toward basic and acidic residues. 2 disordered regions span residues 807–834 (ERAK…SANV) and 848–911 (SGNA…SHSD). 2 stretches are compositionally biased toward polar residues: residues 824–833 (NSETGGSSAN) and 849–862 (GNAS…SSPG). Phosphoserine occurs at positions 859, 860, and 863. The span at 894–911 (SPASAGSSDLMSSDSHSD) shows a compositional bias: low complexity. Phosphoserine is present on residues serine 985, serine 989, serine 993, and serine 999. The segment at 986-1008 (ESASPVHSALGSRSQTPSPSTLN) is disordered. Residue threonine 1001 is modified to Phosphothreonine. 2 positions are modified to phosphoserine: serine 1003 and serine 1477. Residues 1326–2034 (FTNKTVAHVA…PYHHFPADAD (709 aa)) are minimal domain that binds to TCF3/E12. Residues 1713 to 1746 (SEKQENDVINAILKQYTEEKEFVEKHFNDLNMKA) adopt a coiled-coil conformation. Residues 1795-2003 (LRNLDSRQCR…EERARYLQTI (209 aa)) form the Rap-GAP domain.

Component of the heterodimeric RalGAP1 complex with RALGAPB. Heterodimerization is required for activity. Interacts with the HLH region of TCF3/isoform E12. Highly expressed in brain, thymus and testis with lower levels in lung and spleen and barely detectable in heart or liver (at protein level).

The protein resides in the cytoplasm. Its subcellular location is the nucleus. Functionally, catalytic subunit of the heterodimeric RalGAP1 complex which acts as a GTPase activator for the Ras-like small GTPases RALA and RALB. This chain is Ral GTPase-activating protein subunit alpha-1 (Ralgapa1), found in Rattus norvegicus (Rat).